A 414-amino-acid polypeptide reads, in one-letter code: Putative F-box/kelch-repeat protein At2g29800 (414 aa).

The segment at 1–61 is disordered; that stretch reads MASISETSDD…EVENVPPIPR (61 aa). Over residues 20–35 the composition is skewed to basic and acidic residues; that stretch reads KPEEPHKNPQEEKENQ. Acidic residues predominate over residues 40–54; that stretch reads NEADEEDDHQDEEVE. Residues 58–105 enclose the F-box domain; it reads PIPRKIPPVLIENTIAPLRRCHYPKLSLLSNAFRQVISSEDLFQVRSL. 4 Kelch repeats span residues 163–211, 212–258, 263–302, and 305–349; these read KIYV…VIDG, RIYV…IVHV, KIYI…SCVV, and LLYA…SKMA.

The chain is Putative F-box/kelch-repeat protein At2g29800 from Arabidopsis thaliana (Mouse-ear cress).